The chain runs to 446 residues: Telomere-binding protein 51 kDa subunit (446 aa).

This sequence belongs to the telombin family. Monomer.

It localises to the nucleus. The protein resides in the chromosome. Its subcellular location is the telomere. May function as protective capping of the single-stranded telomeric overhang. May also participate in telomere length regulation during DNA replication. Binds specifically to the T4G4-containing extension on the 3'strand and protects this region of the telomere from nuclease digestion and chemical modification. This is Telomere-binding protein 51 kDa subunit from Euplotes crassus.